A 216-amino-acid polypeptide reads, in one-letter code: Transmembrane protein 186 (216 aa).

Residues 1-68 lie on the Mitochondrial matrix side of the membrane; the sequence is MAFLLRVVPR…IYRFRAIRAI (68 aa). The disordered stretch occupies residues 31–52; sequence GDSKRWVGSRSPHSREKSPGTE. Residues 69–91 form a helical membrane-spanning segment; sequence GFLSRLKLAQTAVTVVALPPGFY. Topologically, residues 92-103 are mitochondrial intermembrane; that stretch reads CYSQGLMTLSSL. The chain crosses the membrane as a helical span at residues 104 to 124; sequence CLLGGVASFALAMLCWMSHFF. Residues 125–216 are Mitochondrial matrix-facing; that stretch reads RRLVGILYVN…GTLATLKNSK (92 aa).

Belongs to the TMEM186 family. As to quaternary structure, part of the mitochondrial complex I assembly/MCIA complex that comprises at least the core subunits TMEM126B, NDUFAF1, ECSIT and ACAD9 and complement subunits such as COA1 and TMEM186. Interacts with MT-ND3.

Its subcellular location is the mitochondrion inner membrane. As part of the MCIA complex, required for efficient assembly of the mitochondrial complex I. This chain is Transmembrane protein 186, found in Mus musculus (Mouse).